A 69-amino-acid chain; its full sequence is Large ribosomal subunit protein uL29 (69 aa).

This sequence belongs to the universal ribosomal protein uL29 family.

In Polaromonas sp. (strain JS666 / ATCC BAA-500), this protein is Large ribosomal subunit protein uL29.